Reading from the N-terminus, the 567-residue chain is Organic cation transporter-like protein (567 aa).

Residues 1–21 lie on the Cytoplasmic side of the membrane; sequence MGYDEAIIHLGDFGRYQKIIY. A helical transmembrane segment spans residues 22-42; the sequence is FLICLTSIPVAFHKLAGVFLL. At 43–127 the chain is on the extracellular side; that stretch reads AKPDFRCALP…TEWNLVCGRD (85 aa). 4 N-linked (GlcNAc...) asparagine glycosylation sites follow: asparagine 55, asparagine 67, asparagine 89, and asparagine 97. Residues 128–148 form a helical membrane-spanning segment; that stretch reads FMAATSDSLFMLGVLLGSIVF. Residues 149 to 158 are Cytoplasmic-facing; the sequence is GQLSDKYGRK. Residues 159–179 traverse the membrane as a helical segment; it reads PILFASLVIQVLFGVLAGVAP. Residues 180 to 189 are Extracellular-facing; sequence EYFTYTFARL. A helical membrane pass occupies residues 190 to 210; the sequence is MVGATTSGVFLVAYVVAMEMV. Residues 211 to 219 are Cytoplasmic-facing; that stretch reads GPDKRLYAG. A helical membrane pass occupies residues 220-240; the sequence is IFVMMFFSVGFMLTAVFAYFV. Residues 241–244 lie on the Extracellular side of the membrane; that stretch reads HDWR. Residues 245 to 265 form a helical membrane-spanning segment; the sequence is WLQIALTLPGLIFMFYYWIIP. At 266-343 the chain is on the cytoplasmic side; the sequence is ESARWLLLKG…LFCYPNLRRK (78 aa). The disordered stretch occupies residues 304-326; sequence LDEGENSEEKAKQKLEDQELDEG. The segment covering 310–320 has biased composition (basic and acidic residues); sequence SEEKAKQKLED. The helical transmembrane segment at 344-364 threads the bilayer; that stretch reads TLLIFLDWLVTSGVYYGLSWN. Topologically, residues 365–371 are extracellular; the sequence is TSNLGGN. Residues 372–392 traverse the membrane as a helical segment; that stretch reads VLLNFVISGAVEIPAYIFLLL. At 393–400 the chain is on the cytoplasmic side; the sequence is TLNRWGRR. A helical transmembrane segment spans residues 401-421; sequence SILCGCLVMAGLSLLATVIIP. Residues 422–427 are Extracellular-facing; sequence QRMHTL. The chain crosses the membrane as a helical span at residues 428–448; that stretch reads IVACAMLGKLAITASYGTVYI. Residues 449–462 lie on the Cytoplasmic side of the membrane; that stretch reads FSAEQFPTVVRNVA. The chain crosses the membrane as a helical span at residues 463 to 483; the sequence is LGAASMVARISGMMAPFLNFL. Over 484–489 the chain is Extracellular; that stretch reads ATIWKP. Residues 490–510 form a helical membrane-spanning segment; it reads LPLLICGSLTLVAGLLSLLLP. Residues 511-567 are Cytoplasmic-facing; it reads ETHNKPMLETIADGERFGKKTKADVYLETGQELRAPEAQPLKGSGETNGSTIANGHK. The disordered stretch occupies residues 546–567; that stretch reads PEAQPLKGSGETNGSTIANGHK. A compositionally biased stretch (polar residues) spans 555–567; sequence GETNGSTIANGHK.

The protein belongs to the major facilitator (TC 2.A.1) superfamily. Organic cation transporter (TC 2.A.1.19) family.

It localises to the membrane. Functionally, probably transports organic cations. The protein is Organic cation transporter-like protein (Orct2) of Drosophila melanogaster (Fruit fly).